We begin with the raw amino-acid sequence, 177 residues long: Large ribosomal subunit protein uL6 (177 aa).

Belongs to the universal ribosomal protein uL6 family. In terms of assembly, part of the 50S ribosomal subunit.

Functionally, this protein binds to the 23S rRNA, and is important in its secondary structure. It is located near the subunit interface in the base of the L7/L12 stalk, and near the tRNA binding site of the peptidyltransferase center. The polypeptide is Large ribosomal subunit protein uL6 (Actinobacillus pleuropneumoniae serotype 5b (strain L20)).